We begin with the raw amino-acid sequence, 142 residues long: Small ribosomal subunit protein uS12 (142 aa).

This sequence belongs to the universal ribosomal protein uS12 family. As to quaternary structure, part of the 30S ribosomal subunit.

In terms of biological role, with S4 and S5 plays an important role in translational accuracy. Located at the interface of the 30S and 50S subunits. This chain is Small ribosomal subunit protein uS12, found in Thermoplasma acidophilum (strain ATCC 25905 / DSM 1728 / JCM 9062 / NBRC 15155 / AMRC-C165).